The chain runs to 195 residues: Imidazoleglycerol-phosphate dehydratase (195 aa).

It belongs to the imidazoleglycerol-phosphate dehydratase family.

The protein localises to the cytoplasm. The enzyme catalyses D-erythro-1-(imidazol-4-yl)glycerol 3-phosphate = 3-(imidazol-4-yl)-2-oxopropyl phosphate + H2O. The protein operates within amino-acid biosynthesis; L-histidine biosynthesis; L-histidine from 5-phospho-alpha-D-ribose 1-diphosphate: step 6/9. This Cupriavidus taiwanensis (strain DSM 17343 / BCRC 17206 / CCUG 44338 / CIP 107171 / LMG 19424 / R1) (Ralstonia taiwanensis (strain LMG 19424)) protein is Imidazoleglycerol-phosphate dehydratase.